The chain runs to 245 residues: Epoxyqueuosine reductase QueH (245 aa).

[4Fe-4S] cluster is bound by residues cysteine 52, cysteine 53, cysteine 131, and cysteine 134. Cysteine 214 and cysteine 216 are disulfide-bonded.

The protein belongs to the QueH family.

The enzyme catalyses epoxyqueuosine(34) in tRNA + AH2 = queuosine(34) in tRNA + A + H2O. Its pathway is tRNA modification; tRNA-queuosine biosynthesis. Functionally, catalyzes the conversion of epoxyqueuosine (oQ) to queuosine (Q), which is a hypermodified base found in the wobble positions of tRNA(Asp), tRNA(Asn), tRNA(His) and tRNA(Tyr). This chain is Epoxyqueuosine reductase QueH, found in Haemophilus influenzae (strain ATCC 51907 / DSM 11121 / KW20 / Rd).